Reading from the N-terminus, the 213-residue chain is MNIFRISADMSHLLAIIILLLKIWKSRSCSGISARSQILFALVFTARYLDLFSTYISLYNTTMKITFLAATYATVYLMFFKFRSTYMRESDTFRVELLIVPAAILALLINHDFAPFELLWTFSIYLEAVAILPQLFLLQSTGSAEVITAHYLFALGSYRALYIFNWIYRYYTEDYFDPIVVVAGIVQTVLYADFFYLYVTRVVQTRKGMELPI.

At 1 to 2 (MN) the chain is on the lumenal side. A helical membrane pass occupies residues 3-21 (IFRISADMSHLLAIIILLL). The Cytoplasmic segment spans residues 22 to 35 (KIWKSRSCSGISAR). A helical membrane pass occupies residues 36–53 (SQILFALVFTARYLDLFS). Residues 54-61 (TYISLYNT) are Lumenal-facing. A helical transmembrane segment spans residues 62–80 (TMKITFLAATYATVYLMFF). At 81–96 (KFRSTYMRESDTFRVE) the chain is on the cytoplasmic side. A helical membrane pass occupies residues 97-110 (LLIVPAAILALLIN). The Lumenal segment spans residues 111 to 117 (HDFAPFE). Residues 118–137 (LLWTFSIYLEAVAILPQLFL) traverse the membrane as a helical segment. Residues 138–149 (LQSTGSAEVITA) lie on the Cytoplasmic side of the membrane. Residues 150-168 (HYLFALGSYRALYIFNWIY) traverse the membrane as a helical segment. Residues 169–178 (RYYTEDYFDP) lie on the Lumenal side of the membrane. Residues 179–199 (IVVVAGIVQTVLYADFFYLYV) traverse the membrane as a helical segment. The Cytoplasmic segment spans residues 200 to 213 (TRVVQTRKGMELPI).

The protein belongs to the ERD2 family.

It is found in the endoplasmic reticulum membrane. Required for the retention of luminal endoplasmic reticulum proteins. Determines the specificity of the luminal ER protein retention system. Also required for normal vesicular traffic through the Golgi. This is ER lumen protein-retaining receptor erd-2.2 from Caenorhabditis elegans.